A 407-amino-acid chain; its full sequence is tRNA-specific 2-thiouridylase MnmA (407 aa).

Residues 20 to 27 (AMSGGVDS) and Leu-46 each bind ATP. Cys-114 serves as the catalytic Nucleophile. A disulfide bond links Cys-114 and Cys-210. Position 138 (Gly-138) interacts with ATP. An interaction with tRNA region spans residues 160–162 (RDQ). Residue Cys-210 is the Cysteine persulfide intermediate of the active site.

It belongs to the MnmA/TRMU family.

It is found in the cytoplasm. The enzyme catalyses S-sulfanyl-L-cysteinyl-[protein] + uridine(34) in tRNA + AH2 + ATP = 2-thiouridine(34) in tRNA + L-cysteinyl-[protein] + A + AMP + diphosphate + H(+). Its function is as follows. Catalyzes the 2-thiolation of uridine at the wobble position (U34) of tRNA, leading to the formation of s(2)U34. This chain is tRNA-specific 2-thiouridylase MnmA, found in Bartonella tribocorum (strain CIP 105476 / IBS 506).